A 557-amino-acid chain; its full sequence is MHMNISEIYPSSNKIYINCTLYPDVKVGMRQINIRNSSQRFLLYDTAGPYTDCDIKVNLTEGISSIRRDWIARRNDTYPIRKAKTNSDARGVKALSGDDRVILKGIAGGAPVTQLFYAKKGIITPEMEYVAVRENALLEQAEAIPGLLLPTKTRKITPEFVREEVACGRAVIPSNINHPESEPMIIGRNFLVKINANIGNSAVLSNIEDEVKKMVLAVTYGADTVMDLSTGHDIHNIRELIVRNSPVPIGTVPIYQALNKVNGIVGDLSFEVFKETIIEQAEQGVDYFTIHAGVLKSYIEHTRSRTTGIVSRGGAIMAQWCLLHNKENFLYENFEEICEIMRSYDVTFSLGDGLRPGSINDANDVAQFLELRTLGELVKIARAHDCQVIVEGPGHVPMHLIEENVKKQLDFCDEAPFYTLGPLTTDIAPGYDHITSAIGAAMIGWYGTAMLCYVTPKEHLGLPNAEDVKAGVISYKIAAHAADLAKGNPASFARDYALSQARYDFRWEDQFNLSIDPATAKKLHDESLPGKGGKTAHFCSMCGPKFCSMKLSKALND.

Residues Asn-197, Met-226, Tyr-255, His-291, 311-313 (SRG), 352-355 (DGLR), and Glu-391 each bind substrate. Residue His-395 participates in Zn(2+) binding. Substrate is bound at residue Tyr-418. His-459 lines the Zn(2+) pocket. [4Fe-4S] cluster contacts are provided by Cys-539, Cys-542, and Cys-547.

It belongs to the ThiC family. In terms of assembly, homodimer. It depends on [4Fe-4S] cluster as a cofactor.

It catalyses the reaction 5-amino-1-(5-phospho-beta-D-ribosyl)imidazole + S-adenosyl-L-methionine = 4-amino-2-methyl-5-(phosphooxymethyl)pyrimidine + CO + 5'-deoxyadenosine + formate + L-methionine + 3 H(+). It functions in the pathway cofactor biosynthesis; thiamine diphosphate biosynthesis. In terms of biological role, catalyzes the synthesis of the hydroxymethylpyrimidine phosphate (HMP-P) moiety of thiamine from aminoimidazole ribotide (AIR) in a radical S-adenosyl-L-methionine (SAM)-dependent reaction. The protein is Phosphomethylpyrimidine synthase of Anaplasma phagocytophilum (strain HZ).